We begin with the raw amino-acid sequence, 554 residues long: Urocanate hydratase (554 aa).

Residues 51–52 (GG), Q129, 175–177 (GMG), E195, 241–242 (NA), 262–266 (QTSAH), 272–273 (YL), and Y321 each bind NAD(+). The active site involves C409. G491 serves as a coordination point for NAD(+).

The protein belongs to the urocanase family. The cofactor is NAD(+).

The protein resides in the cytoplasm. The catalysed reaction is 4-imidazolone-5-propanoate = trans-urocanate + H2O. The protein operates within amino-acid degradation; L-histidine degradation into L-glutamate; N-formimidoyl-L-glutamate from L-histidine: step 2/3. In terms of biological role, catalyzes the conversion of urocanate to 4-imidazolone-5-propionate. The polypeptide is Urocanate hydratase (Caulobacter vibrioides (strain ATCC 19089 / CIP 103742 / CB 15) (Caulobacter crescentus)).